Consider the following 837-residue polypeptide: Outer membrane usher protein HifC (837 aa).

Positions 1–26 (MKTKNFPLNKIAFACTLLLANPVAWA) are cleaved as a signal peptide. A disulfide bridge connects residues Cys813 and Cys833.

The protein belongs to the fimbrial export usher family.

The protein resides in the cell outer membrane. In terms of biological role, essential for piliation. In Haemophilus influenzae, this protein is Outer membrane usher protein HifC (hifC).